The sequence spans 255 residues: Indole-3-glycerol phosphate synthase (255 aa).

The protein belongs to the TrpC family.

It catalyses the reaction 1-(2-carboxyphenylamino)-1-deoxy-D-ribulose 5-phosphate + H(+) = (1S,2R)-1-C-(indol-3-yl)glycerol 3-phosphate + CO2 + H2O. It participates in amino-acid biosynthesis; L-tryptophan biosynthesis; L-tryptophan from chorismate: step 4/5. In Priestia megaterium (strain ATCC 12872 / QMB1551) (Bacillus megaterium), this protein is Indole-3-glycerol phosphate synthase (trpC).